We begin with the raw amino-acid sequence, 249 residues long: Chitooligosaccharide deacetylase (249 aa).

2 residues coordinate Mg(2+): histidine 61 and histidine 125.

Belongs to the YdjC deacetylase family. ChbG subfamily. Homodimer. The cofactor is Mg(2+).

Its subcellular location is the cytoplasm. It catalyses the reaction N,N'-diacetylchitobiose + H2O = N-acetyl-beta-D-glucosaminyl-(1-&gt;4)-D-glucosamine + acetate. The catalysed reaction is diacetylchitobiose-6'-phosphate + H2O = N'-monoacetylchitobiose-6'-phosphate + acetate. Its pathway is glycan degradation; chitin degradation. In terms of biological role, involved in the degradation of chitin. ChbG is essential for growth on the acetylated chitooligosaccharides chitobiose and chitotriose but is dispensable for growth on cellobiose and chitosan dimer, the deacetylated form of chitobiose. Deacetylation of chitobiose-6-P and chitotriose-6-P is necessary for both the activation of the chb promoter by the regulatory protein ChbR and the hydrolysis of phosphorylated beta-glucosides by the phospho-beta-glucosidase ChbF. Catalyzes the removal of only one acetyl group from chitobiose-6-P to yield monoacetylchitobiose-6-P, the inducer of ChbR and the substrate of ChbF. The chain is Chitooligosaccharide deacetylase from Escherichia coli O9:H4 (strain HS).